The following is a 398-amino-acid chain: Succinate--CoA ligase [ADP-forming] subunit beta (398 aa).

The ATP-grasp domain occupies 9–254 (KAVLREFGVP…ETEEDAKEIE (246 aa)). ATP-binding positions include Lys46, 53–55 (GRG), Glu109, Ser112, and Glu117. Asn209 and Asp223 together coordinate Mg(2+). Substrate contacts are provided by residues Asn274 and 331 to 333 (GIM).

The protein belongs to the succinate/malate CoA ligase beta subunit family. As to quaternary structure, heterotetramer of two alpha and two beta subunits. It depends on Mg(2+) as a cofactor.

It carries out the reaction succinate + ATP + CoA = succinyl-CoA + ADP + phosphate. The enzyme catalyses GTP + succinate + CoA = succinyl-CoA + GDP + phosphate. It participates in carbohydrate metabolism; tricarboxylic acid cycle; succinate from succinyl-CoA (ligase route): step 1/1. Functionally, succinyl-CoA synthetase functions in the citric acid cycle (TCA), coupling the hydrolysis of succinyl-CoA to the synthesis of either ATP or GTP and thus represents the only step of substrate-level phosphorylation in the TCA. The beta subunit provides nucleotide specificity of the enzyme and binds the substrate succinate, while the binding sites for coenzyme A and phosphate are found in the alpha subunit. This is Succinate--CoA ligase [ADP-forming] subunit beta from Rhodopseudomonas palustris (strain ATCC BAA-98 / CGA009).